Reading from the N-terminus, the 389-residue chain is Chaperone protein DnaJ (389 aa).

The region spanning 5 to 79 (KRDYYEVLGI…RKLYDQFGHE (75 aa)) is the J domain. Residues 151 to 234 (GCNKTIKYER…CRSNKYTVTN (84 aa)) form a CR-type zinc finger. Positions 164, 167, 182, 185, 208, 211, 222, and 225 each coordinate Zn(2+). CXXCXGXG motif repeat units lie at residues 164–171 (CHSCNGFG), 182–189 (CKDCNGNG), 208–215 (CSTCNGQG), and 222–229 (CKTCRSNK).

The protein belongs to the DnaJ family. As to quaternary structure, homodimer. It depends on Zn(2+) as a cofactor.

The protein localises to the cytoplasm. Participates actively in the response to hyperosmotic and heat shock by preventing the aggregation of stress-denatured proteins and by disaggregating proteins, also in an autonomous, DnaK-independent fashion. Unfolded proteins bind initially to DnaJ; upon interaction with the DnaJ-bound protein, DnaK hydrolyzes its bound ATP, resulting in the formation of a stable complex. GrpE releases ADP from DnaK; ATP binding to DnaK triggers the release of the substrate protein, thus completing the reaction cycle. Several rounds of ATP-dependent interactions between DnaJ, DnaK and GrpE are required for fully efficient folding. Also involved, together with DnaK and GrpE, in the DNA replication of plasmids through activation of initiation proteins. This Mycoplasma genitalium (strain ATCC 33530 / DSM 19775 / NCTC 10195 / G37) (Mycoplasmoides genitalium) protein is Chaperone protein DnaJ.